Here is a 394-residue protein sequence, read N- to C-terminus: G2/mitotic-specific cyclin-B (394 aa).

The interval Gln360–Arg394 is disordered. Residues Lys379–Arg394 show a composition bias toward polar residues.

Belongs to the cyclin family. Cyclin AB subfamily. As to quaternary structure, interacts with the CDK1 protein kinase to form a serine/threonine kinase holoenzyme complex also known as maturation promoting factor (MPF). The cyclin subunit imparts substrate specificity to the complex.

Essential for the control of the cell cycle at the G2/M (mitosis) transition. This is G2/mitotic-specific cyclin-B from Patiria pectinifera (Starfish).